The following is a 214-amino-acid chain: Ribosomal RNA small subunit methyltransferase G (214 aa).

Residues Gly-77, Leu-82, 128–129 (VE), and Arg-143 contribute to the S-adenosyl-L-methionine site.

It belongs to the methyltransferase superfamily. RNA methyltransferase RsmG family.

It is found in the cytoplasm. It catalyses the reaction guanosine(527) in 16S rRNA + S-adenosyl-L-methionine = N(7)-methylguanosine(527) in 16S rRNA + S-adenosyl-L-homocysteine. In terms of biological role, specifically methylates the N7 position of guanine in position 527 of 16S rRNA. The sequence is that of Ribosomal RNA small subunit methyltransferase G from Nitrosomonas eutropha (strain DSM 101675 / C91 / Nm57).